The sequence spans 616 residues: Proline dehydrogenase 1, mitochondrial (616 aa).

It belongs to the proline oxidase family. Requires FAD as cofactor.

The protein localises to the mitochondrion matrix. The enzyme catalyses L-proline + a quinone = (S)-1-pyrroline-5-carboxylate + a quinol + H(+). It functions in the pathway amino-acid degradation; L-proline degradation into L-glutamate; L-glutamate from L-proline: step 1/2. Its function is as follows. Converts proline to delta-1-pyrroline-5-carboxylate. Through proline catabolism, promotes reactive oxygen species (ROS) production and the transcription of skn-1 target genes in response to bacterial infection by P.aeruginosa. This is Proline dehydrogenase 1, mitochondrial from Caenorhabditis elegans.